Reading from the N-terminus, the 266-residue chain is Anamorsin homolog (266 aa).

The interval 1-164 (MIINFVGNTL…NITAENPDFL (164 aa)) is N-terminal SAM-like domain. The segment at 165-185 (SNEDNDVSSDDEDLYNNEDDK) is linker. [4Fe-4S] cluster-binding residues include Cys-229, Cys-232, Cys-240, and Cys-243. 2 short sequence motifs (cx2C motif) span residues 229–232 (CGNC) and 240–243 (CASC). The fe-S binding site B stretch occupies residues 229–243 (CGNCYLGDAFRCASC).

This sequence belongs to the anamorsin family. As to quaternary structure, monomer. [4Fe-4S] cluster is required as a cofactor.

Its subcellular location is the cytoplasm. It is found in the mitochondrion intermembrane space. Functionally, component of the cytosolic iron-sulfur (Fe-S) protein assembly (CIA) machinery. Required for the maturation of extramitochondrial Fe-S proteins. Part of an electron transfer chain functioning in an early step of cytosolic Fe-S biogenesis, facilitating the de novo assembly of a [4Fe-4S] cluster on the cytosolic Fe-S scaffold complex. Electrons are transferred from NADPH via a FAD- and FMN-containing diflavin oxidoreductase. Together with the diflavin oxidoreductase, also required for the assembly of the diferric tyrosyl radical cofactor of ribonucleotide reductase (RNR), probably by providing electrons for reduction during radical cofactor maturation in the catalytic small subunit. This Plasmodium falciparum (isolate 3D7) protein is Anamorsin homolog.